Here is a 278-residue protein sequence, read N- to C-terminus: HTH-type transcriptional activator RhaS (278 aa).

In terms of domain architecture, HTH araC/xylS-type spans 174 to 272 (NQLMAWLEDH…NWSPRDIRQG (99 aa)). 2 consecutive DNA-binding regions (H-T-H motif) follow at residues 191-212 (EAVA…KQHT) and 239-262 (VTEI…RREF).

As to quaternary structure, binds DNA as a dimer.

It is found in the cytoplasm. Its function is as follows. Activates expression of the rhaBAD and rhaT operons. The polypeptide is HTH-type transcriptional activator RhaS (Salmonella enteritidis PT4 (strain P125109)).